Reading from the N-terminus, the 308-residue chain is Prephenate dehydratase (308 aa).

In terms of domain architecture, Prephenate dehydratase spans 3–187; it reads RITYLGPEGT…AHTRFVLVGR (185 aa). Residues 201–278 enclose the ACT domain; the sequence is SVVLGLGNVP…EDVRYLGSWP (78 aa).

In terms of assembly, homodimer.

It catalyses the reaction prephenate + H(+) = 3-phenylpyruvate + CO2 + H2O. The protein operates within amino-acid biosynthesis; L-phenylalanine biosynthesis; phenylpyruvate from prephenate: step 1/1. This is Prephenate dehydratase (pheA) from Mycobacteroides abscessus (strain ATCC 19977 / DSM 44196 / CCUG 20993 / CIP 104536 / JCM 13569 / NCTC 13031 / TMC 1543 / L948) (Mycobacterium abscessus).